We begin with the raw amino-acid sequence, 484 residues long: uncharacterized protein (484 aa).

12 helical membrane passes run 19–39, 78–98, 111–131, 134–154, 165–185, 199–219, 249–269, 289–309, 321–341, 360–380, 398–418, and 440–460; these read LSFG…MIFV, VNWG…WLIV, FFML…FIIL, IFAI…SNYL, FSPF…AGII, IVFL…IILG, TWYW…PFTF, ISVF…TIGL, ISTI…VFVL, LFLF…GVML, FGLI…ITSL, and LGAY…LALL.

It is found in the cell membrane. This is an uncharacterized protein from Mesomycoplasma hyopneumoniae (strain 232) (Mycoplasma hyopneumoniae).